We begin with the raw amino-acid sequence, 388 residues long: Lipid-A-disaccharide synthase (388 aa).

Belongs to the LpxB family.

The catalysed reaction is a lipid X + a UDP-2-N,3-O-bis[(3R)-3-hydroxyacyl]-alpha-D-glucosamine = a lipid A disaccharide + UDP + H(+). The protein operates within bacterial outer membrane biogenesis; LPS lipid A biosynthesis. Condensation of UDP-2,3-diacylglucosamine and 2,3-diacylglucosamine-1-phosphate to form lipid A disaccharide, a precursor of lipid A, a phosphorylated glycolipid that anchors the lipopolysaccharide to the outer membrane of the cell. The polypeptide is Lipid-A-disaccharide synthase (Saccharophagus degradans (strain 2-40 / ATCC 43961 / DSM 17024)).